The following is a 255-amino-acid chain: Hemin import ATP-binding protein HmuV (255 aa).

One can recognise an ABC transporter domain in the interval 2 to 238 (LRAHNLHIRR…ESLKAVFGLE (237 aa)). 34 to 41 (GPNGAGKS) serves as a coordination point for ATP.

This sequence belongs to the ABC transporter superfamily. Heme (hemin) importer (TC 3.A.1.14.5) family. The complex is composed of two ATP-binding proteins (HmuV), two transmembrane proteins (HmuU) and a solute-binding protein (HmuT).

The protein localises to the cell inner membrane. Its function is as follows. Part of the ABC transporter complex HmuTUV involved in hemin import. Responsible for energy coupling to the transport system. This is Hemin import ATP-binding protein HmuV from Pseudomonas fluorescens (strain Pf0-1).